Consider the following 353-residue polypeptide: Histidinol-phosphate aminotransferase (353 aa).

Position 218 is an N6-(pyridoxal phosphate)lysine (Lys218).

The protein belongs to the class-II pyridoxal-phosphate-dependent aminotransferase family. Histidinol-phosphate aminotransferase subfamily. Homodimer. Pyridoxal 5'-phosphate is required as a cofactor.

The enzyme catalyses L-histidinol phosphate + 2-oxoglutarate = 3-(imidazol-4-yl)-2-oxopropyl phosphate + L-glutamate. The protein operates within amino-acid biosynthesis; L-histidine biosynthesis; L-histidine from 5-phospho-alpha-D-ribose 1-diphosphate: step 7/9. The chain is Histidinol-phosphate aminotransferase from Synechococcus sp. (strain JA-2-3B'a(2-13)) (Cyanobacteria bacterium Yellowstone B-Prime).